A 363-amino-acid chain; its full sequence is Large ribosomal subunit protein uL4B (363 aa).

The tract at residues 280–363 (PENIISNADV…EKFLSVLHEN (84 aa)) is C-terminal-extended nuclear localization signal.

The protein belongs to the universal ribosomal protein uL4 family. As to quaternary structure, component of the large ribosomal subunit (LSU). Mature yeast ribosomes consist of a small (40S) and a large (60S) subunit. The 40S small subunit contains 1 molecule of ribosomal RNA (18S rRNA) and at least 33 different proteins. The large 60S subunit contains 3 rRNA molecules (25S, 5.8S and 5S rRNA) and at least 46 different proteins. uL4 is associated with the polypeptide exit tunnel. uL4 interacts with its chaperone ACL4 and the nuclear import receptor KAP104.

It is found in the cytoplasm. Component of the ribosome, a large ribonucleoprotein complex responsible for the synthesis of proteins in the cell. The small ribosomal subunit (SSU) binds messenger RNAs (mRNAs) and translates the encoded message by selecting cognate aminoacyl-transfer RNA (tRNA) molecules. The large subunit (LSU) contains the ribosomal catalytic site termed the peptidyl transferase center (PTC), which catalyzes the formation of peptide bonds, thereby polymerizing the amino acids delivered by tRNAs into a polypeptide chain. The nascent polypeptides leave the ribosome through a tunnel in the LSU and interact with protein factors that function in enzymatic processing, targeting, and the membrane insertion of nascent chains at the exit of the ribosomal tunnel. This is Large ribosomal subunit protein uL4B (rpl401) from Schizosaccharomyces pombe (strain 972 / ATCC 24843) (Fission yeast).